We begin with the raw amino-acid sequence, 434 residues long: Adenylosuccinate synthetase (434 aa).

Residues G22–K28 and G50–T52 each bind GTP. The active-site Proton acceptor is the D23. 2 residues coordinate Mg(2+): D23 and G50. IMP is bound by residues D23–K26, N48–H51, T139, R153, Q234, T249, and R313. The active-site Proton donor is the H51. Position 309 to 315 (A309 to R315) interacts with substrate. GTP contacts are provided by residues R315, K341 to D343, and S423 to G425.

It belongs to the adenylosuccinate synthetase family. As to quaternary structure, homodimer. Mg(2+) is required as a cofactor.

The protein resides in the cytoplasm. The enzyme catalyses IMP + L-aspartate + GTP = N(6)-(1,2-dicarboxyethyl)-AMP + GDP + phosphate + 2 H(+). Its pathway is purine metabolism; AMP biosynthesis via de novo pathway; AMP from IMP: step 1/2. Functionally, plays an important role in the de novo pathway of purine nucleotide biosynthesis. Catalyzes the first committed step in the biosynthesis of AMP from IMP. The sequence is that of Adenylosuccinate synthetase from Chlorobium phaeobacteroides (strain DSM 266 / SMG 266 / 2430).